Reading from the N-terminus, the 845-residue chain is Complement component C7 (845 aa).

The first 22 residues, 1–22 (MQVTSLLILVCFIAAFQVFSRA), serve as a signal peptide directing secretion. A TSP type-1 1 domain is found at 27 to 80 (NCKWDSYGPWSECNGCTKTQTRRRSVAVYGQYGGYPCEGSAFETQSCKPERGCP). 6 disulfides stabilise this stretch: C28/C63, C39/C73, C42/C79, C85/C96, C91/C109, and C103/C119. Positions 84–120 (GCGDRFRCFSGQCISKSLVCNGDPDCEEDGADEDKCE) constitute an LDL-receptor class A domain. Residues 122–456 (VANPSCNIDK…EYFDEFDPCH (335 aa)) form the MACPF domain. An N-linked (GlcNAc...) asparagine glycan is attached at N124. C127 and C164 form a disulfide bridge. A glycan (N-linked (GlcNAc...) asparagine) is linked at N201. 21 disulfides stabilise this stretch: C336–C353, C433–C560, C455–C505, C457–C473, C460–C475, C477–C486, C512–C545, C523–C535, C571–C613, C599–C626, C631–C673, C659–C688, C703–C714, C716–C751, C722–C744, C729–C764, C774–C783, C777–C790, C792–C826, C798–C819, and C806–C839. Residues 457 to 487 (CRPCQNGGLAIVVETQCQCLCKPYTFGSACE) enclose the EGF-like domain. The 50-residue stretch at 500 to 549 (DGGWNCWSSWSPCVQGKRTRSRECNNPPPRDDGKSCLGETTESKQCEDQD) folds into the TSP type-1 2 domain. CCP stretches follow at residues 545–615 (CEDQ…RCGE) and 616–693 (DLQW…QKAT). Sushi domains follow at residues 569–628 (EFCL…HCQK) and 629–690 (LACV…KCVQ). 2 factor I module (FIM) regions span residues 695–771 (TPPP…SPAE) and 772–844 (KVCG…EEAA). N755 carries N-linked (GlcNAc...) asparagine glycosylation.

The protein belongs to the complement C6/C7/C8/C9 family. In terms of assembly, monomer or dimer; as a C5b-7 complex it can also form multimeric rosettes. Component of the membrane attack complex (MAC), composed of complement C5b, C6, C7, C8A, C8B, C8G and multiple copies of the pore-forming subunit C9. C-, N- and O-glycosylated. O-glycosylated with core 1 or possibly core 8 glycans.

The protein localises to the secreted. It is found in the target cell membrane. Its activity is regulated as follows. Membrane attack complex (MAC) assembly is inhibited by CD59, thereby protecting self-cells from damage during complement activation. MAC assembly is also inhibited by clusterin (CLU) chaperones that inhibit polymerization of C9. Its function is as follows. Component of the membrane attack complex (MAC), a multiprotein complex activated by the complement cascade, which inserts into a target cell membrane and forms a pore, leading to target cell membrane rupture and cell lysis. The MAC is initiated by proteolytic cleavage of C5 into complement C5b in response to the classical, alternative, lectin and GZMK complement pathways. The complement pathways consist in a cascade of proteins that leads to phagocytosis and breakdown of pathogens and signaling that strengthens the adaptive immune system. C7 serves as a membrane anchor. During MAC assembly, associates with C5b and C6 to form the C5b-7 complex, a key lipophilic precursor of the MAC complex, which associates with the outer leaflet and reduces the energy for membrane bending. The sequence is that of Complement component C7 from Mus musculus (Mouse).